We begin with the raw amino-acid sequence, 369 residues long: 2-aminoethylphosphonate--pyruvate transaminase (369 aa).

N6-(pyridoxal phosphate)lysine is present on Lys193.

This sequence belongs to the class-V pyridoxal-phosphate-dependent aminotransferase family. PhnW subfamily. As to quaternary structure, homodimer. It depends on pyridoxal 5'-phosphate as a cofactor.

It carries out the reaction (2-aminoethyl)phosphonate + pyruvate = phosphonoacetaldehyde + L-alanine. Functionally, involved in phosphonate degradation. In Burkholderia thailandensis (strain ATCC 700388 / DSM 13276 / CCUG 48851 / CIP 106301 / E264), this protein is 2-aminoethylphosphonate--pyruvate transaminase.